Here is a 356-residue protein sequence, read N- to C-terminus: 3-dehydroquinate synthase (356 aa).

Residues 101–105 (GVIGD), 125–126 (TT), Lys138, and Lys147 each bind NAD(+). Glu180, His243, and His260 together coordinate Zn(2+).

This sequence belongs to the sugar phosphate cyclases superfamily. Dehydroquinate synthase family. Co(2+) is required as a cofactor. It depends on Zn(2+) as a cofactor. Requires NAD(+) as cofactor.

The protein resides in the cytoplasm. It carries out the reaction 7-phospho-2-dehydro-3-deoxy-D-arabino-heptonate = 3-dehydroquinate + phosphate. Its pathway is metabolic intermediate biosynthesis; chorismate biosynthesis; chorismate from D-erythrose 4-phosphate and phosphoenolpyruvate: step 2/7. Its function is as follows. Catalyzes the conversion of 3-deoxy-D-arabino-heptulosonate 7-phosphate (DAHP) to dehydroquinate (DHQ). The sequence is that of 3-dehydroquinate synthase from Alkaliphilus metalliredigens (strain QYMF).